The sequence spans 427 residues: Tryptophan synthase beta chain (427 aa).

At K100 the chain carries N6-(pyridoxal phosphate)lysine.

It belongs to the TrpB family. As to quaternary structure, tetramer of two alpha and two beta chains. Pyridoxal 5'-phosphate is required as a cofactor.

It carries out the reaction (1S,2R)-1-C-(indol-3-yl)glycerol 3-phosphate + L-serine = D-glyceraldehyde 3-phosphate + L-tryptophan + H2O. Its pathway is amino-acid biosynthesis; L-tryptophan biosynthesis; L-tryptophan from chorismate: step 5/5. Its function is as follows. The beta subunit is responsible for the synthesis of L-tryptophan from indole and L-serine. This Streptomyces coelicolor (strain ATCC BAA-471 / A3(2) / M145) protein is Tryptophan synthase beta chain (trpB).